A 238-amino-acid polypeptide reads, in one-letter code: Tyrosine recombinase XerD-like (238 aa).

Residues 1–75 (MKLPNEIEEY…SANQYFLFLY (75 aa)) form the Core-binding (CB) domain. In terms of domain architecture, Tyr recombinase spans 90 to 238 (VQKKTQSSES…TITALEKYYR (149 aa)). Residues Lys-154 and Arg-204 contribute to the active site. Catalysis depends on Tyr-236, which acts as the O-(3'-phospho-DNA)-tyrosine intermediate.

This sequence belongs to the 'phage' integrase family. XerD-like subfamily.

The protein localises to the cytoplasm. Functionally, putative tyrosine recombinase. Not involved in the cutting and rejoining of the recombining DNA molecules on dif(SL) site. This is Tyrosine recombinase XerD-like from Lactococcus lactis subsp. cremoris (strain SK11).